Reading from the N-terminus, the 712-residue chain is Polyphosphate kinase (712 aa).

Asn-49 lines the ATP pocket. The Mg(2+) site is built by Arg-398 and Arg-428. The active-site Phosphohistidine intermediate is the His-458. Residues Tyr-491, Arg-587, and His-615 each contribute to the ATP site.

Belongs to the polyphosphate kinase 1 (PPK1) family. Requires Mg(2+) as cofactor. Post-translationally, an intermediate of this reaction is the autophosphorylated ppk in which a phosphate is covalently linked to a histidine residue through a N-P bond.

The enzyme catalyses [phosphate](n) + ATP = [phosphate](n+1) + ADP. Functionally, catalyzes the reversible transfer of the terminal phosphate of ATP to form a long-chain polyphosphate (polyP). This is Polyphosphate kinase from Prochlorococcus marinus (strain MIT 9313).